The chain runs to 156 residues: Small ribosomal subunit protein uS7c (156 aa).

This sequence belongs to the universal ribosomal protein uS7 family. Part of the 30S ribosomal subunit.

The protein resides in the plastid. Its subcellular location is the chloroplast. Functionally, one of the primary rRNA binding proteins, it binds directly to 16S rRNA where it nucleates assembly of the head domain of the 30S subunit. The chain is Small ribosomal subunit protein uS7c (rps7) from Cycas revoluta (Sago palm).